Consider the following 936-residue polypeptide: F-box protein dre-1 (936 aa).

The interval 1 to 67 (MSSSSSPFFH…GSSEADNPTL (67 aa)) is disordered. The span at 22-36 (QQSPSYSQNSNSPSQ) shows a compositional bias: low complexity. Positions 48-63 (GSTSMRYSPSGSSEAD) are enriched in polar residues. The region spanning 159–205 (QDHINRLPEELLLKVFSFLPDKSLLACSSVSYRFNQISNSHEVWKEL) is the F-box domain. PbH1 repeat units lie at residues 405–427 (SAAPKFKYCTVLDCENVGIYITD), 428–450 (NATGHYEHCEIARNTLAGVWVKN), 451–473 (HANPYFRKCTIHSGKDVGVFTFE), 474–496 (HGQGYFEKCNIHSNRISGIEVKN), 497–519 (SANPVVIRCEVHHGYTGGIYVHE), 520–542 (RGRGQFMENRIYANAYAGIWITS), 543–565 (HSDPTIRKNEIFTGQQGGVYIFG), 566–588 (EGRGLIEQNNIYGNALAGIQIRS), 589–611 (QSDPIVRLNKIHDGLHGGIYVHE), 612–634 (KGRGLIEENEVYGNTLAGIWVTT), 635–657 (GSSPILRKNRIHSGKQVGVYFYD), 658–680 (QGHGLLEENDIFNHLYSGVQIRT), 681–703 (GSNPKITRNKIWGGQNGGVLVYN), 704–726 (GGKGCLEDNEIFDNAMAGVWIKT), 727–749 (DSEPTLRRNKIYDGRDGGVCIFN), 750–772 (RGKGLLEDNEIFRNAQAGVLIST), 773–795 (ESNPTLRRNRVFDGKSAGIEITN), and 796–818 (GATATLEENQLFRNKYGGLCVAT). The UBR-type zinc-finger motif lies at 843–914 (GLCLFKVSSN…LERHCHLQNV (72 aa)).

In terms of assembly, component of a SCF ubiquitin ligase complex. Interacts (via F-box) with skr-1. Interacts with blmp-1; the interaction targets blmp-1 for proteasomal degradation. Interacts with ced-9; the interaction inhibits ced-9 activity, either directly or indirectly. In terms of tissue distribution, in mid-embryogenesis, expression is most prominent in epidermal and intestinal cells. By the 1.5-fold stage of embryogenesis, expression is additionally detected in neurons and other cells. During larval and adult stages, highest expression is seen in epidermal seam cells and hypodermis. In larvae, strongly expressed in the P epidermal blast cells and descendents that give rise to the vulva and weakly expressed in the somatic gonad, including the gonadoblasts, the anchor cell and the distal tip cells. Some weak expression also seen in adult spermatheca and uterus. In the musculature, expressed in the pharynx, anal depressor, sex muscles, and body wall muscles. Detected in neurons of the head, tail, ventral cord and periphery. Also expressed in the embryonic tail spike cell.

It localises to the nucleus. The protein localises to the cytoplasm. Its pathway is protein modification; protein ubiquitination. Substrate recognition component of a SCF (SKP1-CUL1-F-box protein) E3 ubiquitin-protein ligase complex which mediates the ubiquitination and subsequent proteasomal degradation of target proteins including blmp-1. Promotes ubiquitination of snail family proteins ces-1, scrt-1 and snai-1. Heterochronic protein which is required for the timing of gonad development and epidermal seam cell differentiation. Regulates tail-spike cell death through inhibition of the apoptosis regulator ced-9. In Caenorhabditis elegans, this protein is F-box protein dre-1.